A 337-amino-acid chain; its full sequence is MVREKVKVSTRTLQWRCVESRRDSKRLYYGRFILSPLMKGQADTIGIAMRRALLGEIEGTCITRAKSENIPHDYSNIVGIQESVHEILMNLNEIVLRSNLYGARNAIICVQGPGYITARDIILPPSVEIIDNTQHIATLTESIDLCIGLKIERNRGYSLKILNTFEDRSYPIDAVFMPVQNANHSIHSYGNGNGKQEILFLEIWTNGSLTPKEALHEASRNLINLFIPFLHVEEETFYLENNQHHVTLPLFPFHNRLVNLRKKKKELAFQYIFIDQLELPPRIYNCLKKSNIHTLLDLLNNSQEDLIKIEHFHIEDVKKILDILEKKIEKAFQKKID.

The segment at 1-233 is alpha N-terminal domain (alpha-NTD); sequence MVREKVKVST…NLFIPFLHVE (233 aa). The segment at 267-337 is alpha C-terminal domain (alpha-CTD); sequence LAFQYIFIDQ…IEKAFQKKID (71 aa).

It belongs to the RNA polymerase alpha chain family. As to quaternary structure, in plastids the minimal PEP RNA polymerase catalytic core is composed of four subunits: alpha, beta, beta', and beta''. When a (nuclear-encoded) sigma factor is associated with the core the holoenzyme is formed, which can initiate transcription.

The protein resides in the plastid. It is found in the chloroplast. It catalyses the reaction RNA(n) + a ribonucleoside 5'-triphosphate = RNA(n+1) + diphosphate. Functionally, DNA-dependent RNA polymerase catalyzes the transcription of DNA into RNA using the four ribonucleoside triphosphates as substrates. In Arabis hirsuta (Hairy rock-cress), this protein is DNA-directed RNA polymerase subunit alpha.